The following is a 60-amino-acid chain: Large ribosomal subunit protein bL32 (60 aa).

The protein belongs to the bacterial ribosomal protein bL32 family.

In Desulfovibrio desulfuricans (strain ATCC 27774 / DSM 6949 / MB), this protein is Large ribosomal subunit protein bL32.